Consider the following 176-residue polypeptide: NADH-quinone oxidoreductase subunit I (176 aa).

4Fe-4S ferredoxin-type domains are found at residues 47–77 and 87–116; these read LTRDPDGEERCVACHLCSAACPVDCISMQAA and AWFRINFSRCIFCGLCTEACPTLALQMTSE. [4Fe-4S] cluster contacts are provided by cysteine 57, cysteine 60, cysteine 63, cysteine 67, cysteine 96, cysteine 99, cysteine 102, and cysteine 106.

This sequence belongs to the complex I 23 kDa subunit family. NDH-1 is composed of 14 different subunits. Subunits NuoA, H, J, K, L, M, N constitute the membrane sector of the complex. The cofactor is [4Fe-4S] cluster.

Its subcellular location is the cell inner membrane. The enzyme catalyses a quinone + NADH + 5 H(+)(in) = a quinol + NAD(+) + 4 H(+)(out). Functionally, NDH-1 shuttles electrons from NADH, via FMN and iron-sulfur (Fe-S) centers, to quinones in the respiratory chain. The immediate electron acceptor for the enzyme in this species is believed to be ubiquinone. Couples the redox reaction to proton translocation (for every two electrons transferred, four hydrogen ions are translocated across the cytoplasmic membrane), and thus conserves the redox energy in a proton gradient. The chain is NADH-quinone oxidoreductase subunit I from Syntrophotalea carbinolica (strain DSM 2380 / NBRC 103641 / GraBd1) (Pelobacter carbinolicus).